Consider the following 477-residue polypeptide: C3a anaphylatoxin chemotactic receptor (477 aa).

At 1–23 (MESFDADTNSTDLHSRPLFQPQD) the chain is on the extracellular side. N-linked (GlcNAc...) asparagine glycosylation is present at asparagine 9. Residues 24-46 (IASMVILGLTCLLGLLGNGLVLW) traverse the membrane as a helical segment. The Cytoplasmic segment spans residues 47–57 (VAGVKMKTTVN). Residues 58-80 (TVWFLHLTLADFLCCLSLPFSLA) form a helical membrane-spanning segment. Residues 81 to 96 (HLILQGHWPYGLFLCK) are Extracellular-facing. Cysteine 95 and cysteine 172 are oxidised to a cystine. The chain crosses the membrane as a helical span at residues 97 to 118 (LIPSIIILNMFASVFLLTAISL). Topologically, residues 119–139 (DRCLIVHKPIWCQNHRNVRTA) are cytoplasmic. A helical transmembrane segment spans residues 140 to 160 (FAICGCVWVVAFVMCVPVFVY). At 161–333 (RDLFIMDNRS…TPLMAITITR (173 aa)) the chain is on the extracellular side. N-linked (GlcNAc...) asparagine glycosylation is present at asparagine 168. Sulfotyrosine is present on residues tyrosine 174 and tyrosine 184. N-linked (GlcNAc...) asparagine glycosylation is found at asparagine 197 and asparagine 201. Position 312 is a sulfotyrosine (tyrosine 312). The helical transmembrane segment at 334 to 353 (LVVGFLVPFFIMVICYSLIV) threads the bilayer. Topologically, residues 354-370 (FRMRKTNFTKSRNKTFR) are cytoplasmic. A helical membrane pass occupies residues 371 to 393 (VAVAVVTVFFICWTPYHLVGVLL). The Extracellular segment spans residues 394–410 (LITDPESSLGEAVMSWD). The chain crosses the membrane as a helical span at residues 411-431 (HMSIALASANSCFNPFLYALL). Topologically, residues 432-477 (GKDFRKKARQSIKGILEAAFSEELTHSTNCTQDKASSKRNNMSTDV) are cytoplasmic. At serine 452 the chain carries Phosphoserine. The residue at position 456 (threonine 456) is a Phosphothreonine.

It belongs to the G-protein coupled receptor 1 family. As to quaternary structure, interacts with VGF-derived peptide TLQP-21. In terms of tissue distribution, detected in varying levels in all tissues examined except the spleen. Especially abundant in heart and lung.

The protein resides in the cell membrane. Its function is as follows. Receptor for the chemotactic and inflammatory peptide anaphylatoxin C3a. This receptor stimulates chemotaxis, granule enzyme release and superoxide anion production. This chain is C3a anaphylatoxin chemotactic receptor (C3ar1), found in Mus musculus (Mouse).